The chain runs to 136 residues: Large-conductance mechanosensitive channel (136 aa).

2 consecutive transmembrane segments (helical) span residues 9 to 29 and 78 to 98; these read AFAVKGNVVDMAVGIIIGAAF and FIQTVIDFLIIAFAIFIGVKA.

The protein belongs to the MscL family. As to quaternary structure, homopentamer.

Its subcellular location is the cell inner membrane. Its function is as follows. Channel that opens in response to stretch forces in the membrane lipid bilayer. May participate in the regulation of osmotic pressure changes within the cell. The chain is Large-conductance mechanosensitive channel from Azotobacter vinelandii (strain DJ / ATCC BAA-1303).